The sequence spans 461 residues: Polycomb group protein FIE1 (461 aa).

The span at 1-11 shows a compositional bias: basic residues; the sequence is MPPSKARRKRS. The disordered stretch occupies residues 1 to 56; it reads MPPSKARRKRSLRDITATVATGTVANSKPGSSSTNEGKQQDKKKEGPQEPDIPPLP. The segment covering 18–37 has biased composition (polar residues); the sequence is TVATGTVANSKPGSSSTNEG. Residues 38–47 show a composition bias toward basic and acidic residues; sequence KQQDKKKEGP. WD repeat units follow at residues 143-186, 189-229, 235-275, 301-338, 351-391, and 398-437; these read DKDE…LDKS, GHGG…CILV, GHRH…IYVE, VHSD…RRPG, PKCS…PVLI, and ECKS…ASSS. Residues 429–461 are disordered; that stretch reads EVDPAASSSKPDQAAAPAAGVGAGAGADADADA. Low complexity predominate over residues 432 to 448; the sequence is PAASSSKPDQAAAPAAG.

It belongs to the WD repeat ESC family. As to expression, specifically expressed in kernel starting from 6 days after pollination.

The protein localises to the nucleus. Functionally, polycomb group (PcG) protein. PcG proteins act by forming multiprotein complexes, which are required to maintain the transcriptionally repressive state of homeotic genes throughout development. PcG proteins are not required to initiate repression, but to maintain it during later stages of development. They probably act via the methylation of histones, rendering chromatin heritably changed in its expressibility. In Zea mays (Maize), this protein is Polycomb group protein FIE1 (FIE1).